We begin with the raw amino-acid sequence, 335 residues long: Endo-1,4-beta-xylanase S20 (335 aa).

Residues 1–22 (MLRKLVTGALAAALLLSGQSNA) form the signal peptide. One can recognise a GH11 domain in the interval 39–241 (NNKNETGNGN…GSGYVDFTYA (203 aa)). 2 N-linked (GlcNAc...) asparagine glycosylation sites follow: N42 and N78. Catalysis depends on E134, which acts as the Nucleophile. N202 carries an N-linked (GlcNAc...) asparagine glycan. E228 serves as the catalytic Proton donor. N-linked (GlcNAc...) asparagine glycosylation is present at N251. Residues 251–291 (NASAPSNNNNNNNNNNDNNGNWNNWNNNNNNNNNNNNNNNN) form a disordered region. Over residues 257-291 (NNNNNNNNNNDNNGNWNNWNNNNNNNNNNNNNNNN) the composition is skewed to low complexity. Positions 300–335 (NCAAIWGQCGGSGYNGPKCCKQGSCKQINQWYSQCQ) constitute a CBM1 domain.

It belongs to the glycosyl hydrolase 11 (cellulase G) family.

It is found in the secreted. It catalyses the reaction Endohydrolysis of (1-&gt;4)-beta-D-xylosidic linkages in xylans.. It participates in glycan degradation; xylan degradation. In terms of biological role, endo-1,4-beta-xylanase involved in the hydrolysis of xylan, a major structural heterogeneous polysaccharide found in plant biomass representing the second most abundant polysaccharide in the biosphere, after cellulose. This is Endo-1,4-beta-xylanase S20 (xynS20) from Neocallimastix patriciarum (Rumen fungus).